A 1237-amino-acid polypeptide reads, in one-letter code: Anion exchange protein 2 (1237 aa).

The segment at 1-237 (MSSAPRRPAS…SYNLQERRRI (237 aa)) is disordered. Residues 1–704 (MSSAPRRPAS…DFRDALDPQC (704 aa)) lie on the Cytoplasmic side of the membrane. 2 stretches are compositionally biased toward basic and acidic residues: residues 37–49 (ELHR…RFEE) and 58–75 (GGEE…EYHR). Basic residues-rich tracts occupy residues 76–85 (QSSHHIHHPL) and 94–110 (RRRK…RRRP). 5 positions are modified to phosphoserine: S113, S132, S144, S170, and S172. Positions 120–133 (TIEEGEEDEDEASE) are enriched in acidic residues. Residues 137–151 (ARAPTQPSPASTPSS) show a composition bias toward low complexity. Positions 205-215 (GTAGGDDGGAS) are enriched in gly residues. Residue S239 is modified to Phosphoserine. The residue at position 253 (T253) is a Phosphothreonine. K270 carries the post-translational modification N6-methyllysine. Positions 286 to 316 (RKNAKGSVQSGREGREPGPTPRARPRAPHKP) are disordered. S439 carries the phosphoserine modification. Positions 445–466 (SLLGHHHGQGAESDPHVTEPLI) are disordered. Residues 704–1237 (CLAAVIFIYF…DEYNEMPMPV (534 aa)) form a membrane (anion exchange) region. Helical transmembrane passes span 705-725 (LAAV…FGGL), 750-770 (FCLL…LLVF), 792-812 (IGFW…SFLV), and 822-842 (IFAF…LVKI). Residues 843 to 893 (FQEHPLHGCSVSNSSEADSGDNATWAGTRVTLGLGNGSSAGPAGQGRPRGQ) are Extracellular-facing. N-linked (GlcNAc...) asparagine glycans are attached at residues N855, N864, and N878. A helical transmembrane segment spans residues 894-914 (PNTALLSLVLMAGTFFIAFFL). Residues 915-929 (RKFKNGRFFPGRVRR) are Cytoplasmic-facing. The next 5 helical transmembrane spans lie at 930-950 (VIGD…DYSI), 985-1005 (FPVW…ILIF), 1032-1052 (LLLI…WLAA), 1086-1106 (RVTG…GDLL), and 1109-1129 (IPLA…LNGI). C1169 is lipidated: S-palmitoyl cysteine. The helical transmembrane segment at 1170-1190 (LALLWAVMSTAASLAFPFILI) threads the bilayer.

The protein belongs to the anion exchanger (TC 2.A.31) family.

It localises to the apical cell membrane. The protein localises to the basolateral cell membrane. It carries out the reaction hydrogencarbonate(in) + chloride(out) = hydrogencarbonate(out) + chloride(in). In terms of biological role, sodium-independent anion exchanger which mediates the electroneutral exchange of chloride for bicarbonate ions across the cell membrane. Plays an important role in osteoclast differentiation and function. Regulates bone resorption and calpain-dependent actin cytoskeleton organization in osteoclasts via anion exchange-dependent control of pH. Essential for intracellular pH regulation in CD8(+) T-cells upon CD3 stimulation, modulating CD8(+) T-cell response. The polypeptide is Anion exchange protein 2 (SLC4A2) (Equus caballus (Horse)).